Reading from the N-terminus, the 599-residue chain is Elongation factor 4 (599 aa).

The tr-type G domain maps to 5-187 (SHIRNFSIIA…VLIKSVPAPV (183 aa)). GTP-binding positions include 17 to 22 (DHGKST) and 134 to 137 (NKID).

This sequence belongs to the TRAFAC class translation factor GTPase superfamily. Classic translation factor GTPase family. LepA subfamily.

It localises to the cell inner membrane. The enzyme catalyses GTP + H2O = GDP + phosphate + H(+). Its function is as follows. Required for accurate and efficient protein synthesis under certain stress conditions. May act as a fidelity factor of the translation reaction, by catalyzing a one-codon backward translocation of tRNAs on improperly translocated ribosomes. Back-translocation proceeds from a post-translocation (POST) complex to a pre-translocation (PRE) complex, thus giving elongation factor G a second chance to translocate the tRNAs correctly. Binds to ribosomes in a GTP-dependent manner. The protein is Elongation factor 4 of Saccharophagus degradans (strain 2-40 / ATCC 43961 / DSM 17024).